The following is a 307-amino-acid chain: Nicotinamide/nicotinic acid mononucleotide adenylyltransferase 2 (307 aa).

Residues Ser-16 and Phe-17 each contribute to the NAD(+) site. His-24 lines the ATP pocket. Residues Trp-92 and Thr-95 each coordinate NAD(+). 2 S-palmitoyl cysteine lipidation sites follow: Cys-164 and Cys-165. Residues Gly-200, Asp-202, Leu-212, Trp-213, and Arg-232 each contribute to the NAD(+) site. An ATP-binding site is contributed by Thr-271–Arg-274.

Belongs to the eukaryotic NMN adenylyltransferase family. Monomer. Mg(2+) serves as cofactor. Degraded in response to injured neurite. Degradation is caused by polyubiquitination by MYCBP2 after recognition by FBXO45. In terms of processing, palmitoylated; palmitoylation is required for membrane association.

The protein localises to the golgi apparatus membrane. Its subcellular location is the cytoplasmic vesicle membrane. It is found in the cytoplasm. The protein resides in the cell projection. It localises to the axon. The catalysed reaction is beta-nicotinamide D-ribonucleotide + ATP + H(+) = diphosphate + NAD(+). The enzyme catalyses nicotinate beta-D-ribonucleotide + ATP + H(+) = deamido-NAD(+) + diphosphate. Its pathway is cofactor biosynthesis; NAD(+) biosynthesis; NAD(+) from nicotinamide D-ribonucleotide: step 1/1. It functions in the pathway cofactor biosynthesis; NAD(+) biosynthesis; deamido-NAD(+) from nicotinate D-ribonucleotide: step 1/1. With respect to regulation, inhibited by P1-(adenosine-5')-P3-(nicotinamide-riboside-5')-triphosphate (Np3AD) and P1-(adenosine-5')-P4-(nicotinamide-riboside-5')-tetraphosphate (Np4AD). Functionally, nicotinamide/nicotinate-nucleotide adenylyltransferase that acts as an axon maintenance factor. Axon survival factor required for the maintenance of healthy axons: acts by delaying Wallerian axon degeneration, an evolutionarily conserved process that drives the loss of damaged axons. Catalyzes the formation of NAD(+) from nicotinamide mononucleotide (NMN) and ATP. Can also use the deamidated form; nicotinic acid mononucleotide (NaMN) as substrate but with a lower efficiency. Cannot use triazofurin monophosphate (TrMP) as substrate. Also catalyzes the reverse reaction, i.e. the pyrophosphorolytic cleavage of NAD(+). For the pyrophosphorolytic activity prefers NAD(+), NADH and NaAD as substrates and degrades nicotinic acid adenine dinucleotide phosphate (NHD) less effectively. Fails to cleave phosphorylated dinucleotides NADP(+), NADPH and NaADP(+). Also acts as an activator of ADP-ribosylation by supporting the catalytic activity of PARP16 and promoting mono-ADP-ribosylation of ribosomes by PARP16. May be involved in the maintenance of axonal integrity. In Bos taurus (Bovine), this protein is Nicotinamide/nicotinic acid mononucleotide adenylyltransferase 2 (NMNAT2).